A 95-amino-acid chain; its full sequence is MKTTLDLPDELMRAIKVRAAQQGRKMKDVVTELLRSGLSQTHSGAPIPTPRRVQLPLVHCGGAATREQEMTPERVAAALLDQEAQWWSGHDDAAL.

Its function is as follows. Antitoxin component of a type II toxin-antitoxin (TA) system. In Mycobacterium tuberculosis (strain CDC 1551 / Oshkosh), this protein is Antitoxin VapB41 (vapB41).